The following is a 121-amino-acid chain: uncharacterized protein (121 aa).

In terms of domain architecture, HTH gntR-type spans 9–77; it reads KPIYLQIADQ…RGQGTFIAEK (69 aa). A DNA-binding region (H-T-H motif) is located at residues 37-56; that stretch reads VREMAIQTKVNPNTIQRTYS.

This is an uncharacterized protein from Bacillus subtilis (strain 168).